A 94-amino-acid chain; its full sequence is Putative toxin RelE4 (94 aa).

Belongs to the RelE toxin family.

Its function is as follows. Toxic component of a type II toxin-antitoxin (TA) system. Its cognate antitoxin is RelB4 (Potential). This Methanocaldococcus jannaschii (strain ATCC 43067 / DSM 2661 / JAL-1 / JCM 10045 / NBRC 100440) (Methanococcus jannaschii) protein is Putative toxin RelE4 (relE4).